The following is a 163-amino-acid chain: MLKRSLLFLTVLLLLFSFSSITNEVSASSSFDKGKYKKGDDASYFEPTGPYLMVNVTGVDGKGNELLSPHYVEFPIKPGTTLTKEKIEYYVEWALDATAYKEFRVVELDTSAKIEVTYYDKNKKKEETKSFPITEKGFVVPDLSEHIKNPGFNLITKVVIEKK.

The N-terminal stretch at 1–27 (MLKRSLLFLTVLLLLFSFSSITNEVSA) is a signal peptide.

It belongs to the staphylokinase family.

The protein localises to the secreted. Its function is as follows. Potent plasminogen activator that converts plasminogen into plasmin. It forms a 1:1 complex with plasmin, which in turn activates other plasminogen molecules. The polypeptide is Staphylokinase (sak) (Staphylococcus aureus (strain MW2)).